We begin with the raw amino-acid sequence, 1053 residues long: Integrin alpha-3 (1053 aa).

An N-terminal signal peptide occupies residues 1–32 (MGPGPCRVPRAPGWLLRALALMVAACGRVAFA). Over 33–993 (FNLDTRFLVV…LVEELPAEIE (961 aa)) the chain is Extracellular. 7 FG-GAP repeats span residues 38-103 (RFLV…KDDC), 110-171 (EKSD…DLQL), 185-235 (CNSN…WDLS), 236-293 (EYSY…GGDL), 294-355 (QRKQ…ASFP), 357-412 (QPSL…GLLR), and 416-478 (QIIH…VARP). Asn86 carries an N-linked (GlcNAc...) asparagine glycan. Intrachain disulfides connect Cys94–Cys103, Cys140–Cys162, and Cys185–Cys197. Cystine bridges form between Cys486/Cys491 and Cys497/Cys551. Residues Asn501, Asn512, Asn574, and Asn606 are each glycosylated (N-linked (GlcNAc...) asparagine). A disulfide bond links Cys616 and Cys622. Residues Asn657, Asn699, Asn843, and Asn859 are each glycosylated (N-linked (GlcNAc...) asparagine). Cysteines 695 and 704 form a disulfide. 2 disulfide bridges follow: Cys848/Cys906 and Cys913/Cys918. The tract at residues 865 to 890 (PGVTPLSPQRRRRQLDPGGDQSSPPV) is disordered. Asn925, Asn928, Asn937, and Asn971 each carry an N-linked (GlcNAc...) asparagine glycan. Residues 994-1021 (LWLVLVAVGAGLLLLGLIILLLWKCGFF) traverse the membrane as a helical segment. The S-palmitoyl cysteine moiety is linked to residue Cys1018. Residues 1022-1053 (KRARTRALYEAKRQKAEMKSQPSETERLTDDY) are Cytoplasmic-facing.

This sequence belongs to the integrin alpha chain family. Heterodimer of an alpha and a beta subunit. The alpha subunit is composed of a heavy and a light chain linked by a disulfide bond. Alpha-3 associates with beta-1. Interacts with HPS5. Interacts with FAP (seprase); the interaction occurs at the cell surface of invadopodia membrane in a collagen-dependent manner. In terms of tissue distribution, isoform 1 and isoform 2 are expressed in heart and brain. Only isoform 1 is detected in lung.

The protein localises to the cell membrane. It localises to the cell projection. Its subcellular location is the invadopodium membrane. It is found in the filopodium membrane. Functionally, integrin alpha-3/beta-1 is a receptor for fibronectin, laminin, collagen, epiligrin, thrombospondin and CSPG4. Integrin alpha-3/beta-1 provides a docking site for FAP (seprase) at invadopodia plasma membranes in a collagen-dependent manner and hence may participate in the adhesion, formation of invadopodia and matrix degradation processes, promoting cell invasion. Alpha-3/beta-1 may mediate with LGALS3 the stimulation by CSPG4 of endothelial cells migration. This Mus musculus (Mouse) protein is Integrin alpha-3 (Itga3).